Reading from the N-terminus, the 160-residue chain is Crossover junction endodeoxyribonuclease RuvC (160 aa).

Residues aspartate 9, glutamate 68, and aspartate 141 contribute to the active site. The Mg(2+) site is built by aspartate 9, glutamate 68, and aspartate 141.

This sequence belongs to the RuvC family. In terms of assembly, homodimer which binds Holliday junction (HJ) DNA. The HJ becomes 2-fold symmetrical on binding to RuvC with unstacked arms; it has a different conformation from HJ DNA in complex with RuvA. In the full resolvosome a probable DNA-RuvA(4)-RuvB(12)-RuvC(2) complex forms which resolves the HJ. Mg(2+) serves as cofactor.

It is found in the cytoplasm. The enzyme catalyses Endonucleolytic cleavage at a junction such as a reciprocal single-stranded crossover between two homologous DNA duplexes (Holliday junction).. In terms of biological role, the RuvA-RuvB-RuvC complex processes Holliday junction (HJ) DNA during genetic recombination and DNA repair. Endonuclease that resolves HJ intermediates. Cleaves cruciform DNA by making single-stranded nicks across the HJ at symmetrical positions within the homologous arms, yielding a 5'-phosphate and a 3'-hydroxyl group; requires a central core of homology in the junction. The consensus cleavage sequence is 5'-(A/T)TT(C/G)-3'. Cleavage occurs on the 3'-side of the TT dinucleotide at the point of strand exchange. HJ branch migration catalyzed by RuvA-RuvB allows RuvC to scan DNA until it finds its consensus sequence, where it cleaves and resolves the cruciform DNA. This Campylobacter jejuni subsp. jejuni serotype O:23/36 (strain 81-176) protein is Crossover junction endodeoxyribonuclease RuvC.